The primary structure comprises 382 residues: L-lysine 4-hydroxylase (382 aa).

Positions 182, 184, and 318 each coordinate Fe cation.

This sequence belongs to the clavaminate synthase family. Fe(2+) is required as a cofactor.

It carries out the reaction L-lysine + 2-oxoglutarate + O2 = (4R)-4-hydroxy-L-lysine + succinate + CO2. Alpha-ketoglutarate-dependent dioxygenase that in vitro catalyzes the regio- and stereoselective hydroxylation of L-lysine, leading to (4R)-4-hydroxy-L-lysine. Cannot use D-lysine or L-ornithine as substrate. The protein is L-lysine 4-hydroxylase of Chitinophaga pinensis (strain ATCC 43595 / DSM 2588 / LMG 13176 / NBRC 15968 / NCIMB 11800 / UQM 2034).